The following is a 343-amino-acid chain: Melanoma-associated antigen B18 (343 aa).

Over residues M1–Q17 the composition is skewed to basic residues. Residues M1–W102 are disordered. Positions A67–S87 are enriched in polar residues. A compositionally biased stretch (basic and acidic residues) spans Q88–W102. Positions E100–K343 are interaction with LNX1. The MAGE domain maps to L107–A306. Positions R313–K343 are disordered. The span at A316–R333 shows a compositional bias: low complexity. Polar residues predominate over residues T334 to K343.

Interacts with LNX1.

Its subcellular location is the cytoplasm. Its function is as follows. May enhance ubiquitin ligase activity of RING-type zinc finger-containing E3 ubiquitin-protein ligases. Proposed to act through recruitment and/or stabilization of the Ubl-conjugating enzyme (E2) at the E3:substrate complex. This chain is Melanoma-associated antigen B18 (MAGEB18), found in Homo sapiens (Human).